Consider the following 396-residue polypeptide: Ribosomal RNA large subunit methyltransferase I (396 aa).

The region spanning 2–79 (SIRIKLKPGR…KEEAIDRDFF (78 aa)) is the PUA domain.

Belongs to the methyltransferase superfamily. RlmI family.

The protein resides in the cytoplasm. It catalyses the reaction cytidine(1962) in 23S rRNA + S-adenosyl-L-methionine = 5-methylcytidine(1962) in 23S rRNA + S-adenosyl-L-homocysteine + H(+). In terms of biological role, specifically methylates the cytosine at position 1962 (m5C1962) of 23S rRNA. The chain is Ribosomal RNA large subunit methyltransferase I from Shewanella amazonensis (strain ATCC BAA-1098 / SB2B).